A 534-amino-acid chain; its full sequence is Pentatricopeptide repeat-containing protein At5g08305 (534 aa).

11 PPR repeats span residues 41–71 (PFVS…LSDP), 72–106 (PNYG…GLLP), 107–141 (DHMT…GLEW), 142–172 (DLFI…MPHK), 173–203 (NLVT…MSER), 204–238 (DVVT…GSSK), 240–274 (NEVT…HLPL), 275–305 (TVIL…ASVK), 308–342 (DALM…KIDP), 343–377 (DEIT…GAEP), and 378–408 (KSEH…MPIK). The type E motif stretch occupies residues 413-488 (MLGALLNGCI…IAGHSILDLD (76 aa)). The type E(+) motif stretch occupies residues 489–519 (GTRHRFIAHDKTHFHSDKIYAVLQLTGAWMN).

This sequence belongs to the PPR family. PCMP-E subfamily.

In Arabidopsis thaliana (Mouse-ear cress), this protein is Pentatricopeptide repeat-containing protein At5g08305 (PCMP-E105).